We begin with the raw amino-acid sequence, 455 residues long: Probable glycine dehydrogenase (decarboxylating) subunit 1 (455 aa).

This sequence belongs to the GcvP family. N-terminal subunit subfamily. In terms of assembly, the glycine cleavage system is composed of four proteins: P, T, L and H. In this organism, the P 'protein' is a heterodimer of two subunits.

The catalysed reaction is N(6)-[(R)-lipoyl]-L-lysyl-[glycine-cleavage complex H protein] + glycine + H(+) = N(6)-[(R)-S(8)-aminomethyldihydrolipoyl]-L-lysyl-[glycine-cleavage complex H protein] + CO2. In terms of biological role, the glycine cleavage system catalyzes the degradation of glycine. The P protein binds the alpha-amino group of glycine through its pyridoxal phosphate cofactor; CO(2) is released and the remaining methylamine moiety is then transferred to the lipoamide cofactor of the H protein. The chain is Probable glycine dehydrogenase (decarboxylating) subunit 1 from Francisella tularensis subsp. novicida (strain U112).